We begin with the raw amino-acid sequence, 2517 residues long: Cullin-9 (2517 aa).

Residue Lys87 forms a Glycyl lysine isopeptide (Lys-Gly) (interchain with G-Cter in ubiquitin) linkage. Residues 276–288 show a composition bias toward polar residues; it reads SPELGAGDQSSPC. Residues 276–296 are disordered; it reads SPELGAGDQSSPCATREKSRG. The region spanning 366–439 is the CPH domain; that stretch reads RSEFSSRSGY…HWHMLEILGP (74 aa). Positions 576–589 are enriched in low complexity; that stretch reads SNEPSSSSTSRNHS. Positions 576 to 639 are disordered; that stretch reads SNEPSSSSTS…TETPMAQSDS (64 aa). The segment covering 593–609 has biased composition (acidic residues); sequence DPEEESKSEASFSEEET. A compositionally biased stretch (basic and acidic residues) spans 610–630; it reads ESLKAKAEAPKTEAEPTKTRT. Phosphoserine is present on Ser976. Residues 1143–1322 form the DOC domain; that stretch reads PINIPFFDVF…RTCLFYTIRA (180 aa). 1363–1370 provides a ligand contact to ATP; the sequence is AAQALGKT. Disordered stretches follow at residues 1432 to 1466 and 1664 to 1685; these read VEPP…VLPS and DEEE…AEKE. A compositionally biased stretch (pro residues) spans 1433–1443; the sequence is EPPPGPSPEPS. Ser1457 is subject to Phosphoserine. Residues 1649–1691 are a coiled coil; sequence LFQLQRLDKLFLEQEDEEEKRLEEEEEEEEEEEAEKELFIEDP. Over residues 1664–1683 the composition is skewed to acidic residues; that stretch reads DEEEKRLEEEEEEEEEEEAE. A Glycyl lysine isopeptide (Lys-Gly) (interchain with G-Cter in NEDD8) cross-link involves residue Lys1881. Positions 2066–2283 are TRIAD supradomain; sequence RPDHCPVCVS…KDYYNCSAMV (218 aa). Residues Cys2070, Cys2073, Cys2088, His2090, Cys2093, Cys2096, Cys2115, Cys2120, Cys2160, Cys2166, Cys2181, Cys2184, Cys2189, Cys2192, His2198, Cys2203, Cys2236, and Cys2239 each coordinate Zn(2+). The RING-type 1 zinc-finger motif lies at 2070–2120; the sequence is CPVCVSPLGCDDDLPSLCCMHYCCKSCWNEYLTTRIEQNLVLNCTCPIADC. The IBR-type zinc-finger motif lies at 2140–2203; sequence SKYEKALLRG…FPEAHYPASC (64 aa). The segment at 2236–2265 adopts an RING-type 2; atypical zinc-finger fold; sequence CPSCQAPIEKNEGCLHMTCAKCNHGFCWRC. Cys2249 is an active-site residue. The Zn(2+) site is built by Cys2254, Cys2257, Cys2262, Cys2265, His2273, and Cys2279. A coiled-coil region spans residues 2365–2385; that stretch reads VEQQTENLELHTNALQILLEE. Ser2436 bears the Phosphoserine mark. Residues 2442 to 2517 form a disordered region; that stretch reads WEAKGPNMPG…EEEDEDEAYD (76 aa). 2 stretches are compositionally biased toward acidic residues: residues 2461–2499 and 2506–2517; these read EAEE…ENLD and GDEEEDEDEAYD.

The protein belongs to the cullin family. In terms of assembly, component of the Cul9-RING complex consisting of CUL9 and RBX1; the CUL9-RBX1 complex is a heterododecamer composed of six CUL9 and six RBX1 protomers. Interacts (via C-terminal TRIAD/RBR supradomain) with E2 ubiquitin-conjugating enzyme UBE2L3. Interacts with CUL7; the interaction with the CUL7 component of the 3M complex leads to inhibition of CUL9 activity. The CUL7-CUL9 heterodimer seems to interact specifically with TP53, likely via the CPH domain. Forms a complex with p53/TP53 in the cytoplasm of unstressed cells. Interacts with UBCH7 and UBCH8. Post-translationally, autoubiquitinated by the CUL9-RBX1 complex at Lys-87. In terms of processing, neddylated. Neddylation is mediated by E1 enzyme UBA3-NAE1 complex and E2 enzyme UBE2F. Structural rearrangment of the C-terminal TRIAD/RBR supradomain may play a role in neddylation and deneddylation. Ubiquitously expressed in all tissues with highest expression in testis brain and kidney.

It is found in the cytoplasm. Core component of a Cul9-RING ubiquitin-protein ligase complex composed of CUL9 and RBX1. The CUL9-RBX1 complex mediates ubiquitination and subsequent degradation of BIRC5 and is required to maintain microtubule dynamics and genome integrity. Acts downstream of the 3M complex, which inhibits the ubiquitination of BIRC5. The CUL9-RBX1 complex also mediates mono-ubiquitination of p53/TP53. Acts as a cytoplasmic anchor protein in p53/TP53-associated protein complex. Regulates the subcellular localization of p53/TP53 and its subsequent function. Ubiquitinates apurinic/apyrimidinic endodeoxyribonuclease APEX2. Ubiquitination by the CUL9-RBX1 complex is predominantly mediated by E2 ubiquitin-conjugating enzymes UBE2L3 and UBE2D2. This chain is Cullin-9 (CUL9), found in Homo sapiens (Human).